The following is a 240-amino-acid chain: UDP-2,3-diacylglucosamine hydrolase (240 aa).

Positions 7, 9, 40, 78, and 113 each coordinate Mn(2+). A substrate-binding site is contributed by N78–R79. Substrate is bound by residues D121, S159, T163, K166, and H194. Mn(2+) contacts are provided by H194 and H196.

This sequence belongs to the LpxH family. It depends on Mn(2+) as a cofactor.

It is found in the cell inner membrane. It carries out the reaction UDP-2-N,3-O-bis[(3R)-3-hydroxytetradecanoyl]-alpha-D-glucosamine + H2O = 2-N,3-O-bis[(3R)-3-hydroxytetradecanoyl]-alpha-D-glucosaminyl 1-phosphate + UMP + 2 H(+). It participates in glycolipid biosynthesis; lipid IV(A) biosynthesis; lipid IV(A) from (3R)-3-hydroxytetradecanoyl-[acyl-carrier-protein] and UDP-N-acetyl-alpha-D-glucosamine: step 4/6. Hydrolyzes the pyrophosphate bond of UDP-2,3-diacylglucosamine to yield 2,3-diacylglucosamine 1-phosphate (lipid X) and UMP by catalyzing the attack of water at the alpha-P atom. Involved in the biosynthesis of lipid A, a phosphorylated glycolipid that anchors the lipopolysaccharide to the outer membrane of the cell. This is UDP-2,3-diacylglucosamine hydrolase from Pseudomonas entomophila (strain L48).